A 674-amino-acid chain; its full sequence is Methionine--tRNA ligase (674 aa).

The short motif at 11–21 (PYANGDLHLGH) is the 'HIGH' region element. Residues cysteine 142, cysteine 145, cysteine 155, and cysteine 158 each contribute to the Zn(2+) site. The 'KMSKS' region motif lies at 330–334 (KMSKS). Lysine 333 is an ATP binding site. Residues 574–674 (DFMKVDLRIA…EGAQPGMRVK (101 aa)) enclose the tRNA-binding domain.

This sequence belongs to the class-I aminoacyl-tRNA synthetase family. MetG type 1 subfamily. In terms of assembly, homodimer. Requires Zn(2+) as cofactor.

It localises to the cytoplasm. The catalysed reaction is tRNA(Met) + L-methionine + ATP = L-methionyl-tRNA(Met) + AMP + diphosphate. Functionally, is required not only for elongation of protein synthesis but also for the initiation of all mRNA translation through initiator tRNA(fMet) aminoacylation. The chain is Methionine--tRNA ligase from Francisella tularensis subsp. tularensis (strain WY96-3418).